The sequence spans 346 residues: Uroporphyrinogen decarboxylase (346 aa).

Substrate contacts are provided by residues 23–27 (RQAGR), D73, Y151, S206, and H321.

Belongs to the uroporphyrinogen decarboxylase family. As to quaternary structure, homodimer.

Its subcellular location is the cytoplasm. The enzyme catalyses uroporphyrinogen III + 4 H(+) = coproporphyrinogen III + 4 CO2. The protein operates within porphyrin-containing compound metabolism; protoporphyrin-IX biosynthesis; coproporphyrinogen-III from 5-aminolevulinate: step 4/4. Its function is as follows. Catalyzes the decarboxylation of four acetate groups of uroporphyrinogen-III to yield coproporphyrinogen-III. The protein is Uroporphyrinogen decarboxylase of Aliarcobacter butzleri (strain RM4018) (Arcobacter butzleri).